We begin with the raw amino-acid sequence, 668 residues long: DNA ligase (668 aa).

NAD(+)-binding positions include 37–41, 86–87, and E116; these read DAVYD and SM. The N6-AMP-lysine intermediate role is filled by K118. NAD(+) contacts are provided by R139, E173, K288, and K312. Residues C406, C409, C424, and C429 each contribute to the Zn(2+) site. One can recognise a BRCT domain in the interval 590-668; that stretch reads APDNFFKEKT…EQEAIAKIEK (79 aa).

It belongs to the NAD-dependent DNA ligase family. LigA subfamily. The cofactor is Mg(2+). Requires Mn(2+) as cofactor.

The catalysed reaction is NAD(+) + (deoxyribonucleotide)n-3'-hydroxyl + 5'-phospho-(deoxyribonucleotide)m = (deoxyribonucleotide)n+m + AMP + beta-nicotinamide D-nucleotide.. DNA ligase that catalyzes the formation of phosphodiester linkages between 5'-phosphoryl and 3'-hydroxyl groups in double-stranded DNA using NAD as a coenzyme and as the energy source for the reaction. It is essential for DNA replication and repair of damaged DNA. This chain is DNA ligase, found in Lactobacillus gasseri (strain ATCC 33323 / DSM 20243 / BCRC 14619 / CIP 102991 / JCM 1131 / KCTC 3163 / NCIMB 11718 / NCTC 13722 / AM63).